The primary structure comprises 162 residues: NADH-quinone oxidoreductase subunit I (162 aa).

2 consecutive 4Fe-4S ferredoxin-type domains span residues 54–83 and 93–122; these read RRYENGEERCIACKLCEAVCPAMAITIESE and TRYDIDLTKCIFCGFCEESCPVDSIVETQI. [4Fe-4S] cluster contacts are provided by cysteine 63, cysteine 66, cysteine 69, cysteine 73, cysteine 102, cysteine 105, cysteine 108, and cysteine 112.

It belongs to the complex I 23 kDa subunit family. In terms of assembly, NDH-1 is composed of 14 different subunits. Subunits NuoA, H, J, K, L, M, N constitute the membrane sector of the complex. [4Fe-4S] cluster serves as cofactor.

The protein localises to the cell inner membrane. The enzyme catalyses a quinone + NADH + 5 H(+)(in) = a quinol + NAD(+) + 4 H(+)(out). Functionally, NDH-1 shuttles electrons from NADH, via FMN and iron-sulfur (Fe-S) centers, to quinones in the respiratory chain. The immediate electron acceptor for the enzyme in this species is believed to be ubiquinone. Couples the redox reaction to proton translocation (for every two electrons transferred, four hydrogen ions are translocated across the cytoplasmic membrane), and thus conserves the redox energy in a proton gradient. The polypeptide is NADH-quinone oxidoreductase subunit I (Burkholderia thailandensis (strain ATCC 700388 / DSM 13276 / CCUG 48851 / CIP 106301 / E264)).